We begin with the raw amino-acid sequence, 696 residues long: DNA topoisomerase 6 subunit B (696 aa).

The interval 1 to 36 (MDDDAGDGAASGGTKRKVTAASSSAAAKGKAAGKGK) is disordered. Over residues 20–36 (AASSSAAAKGKAAGKGK) the composition is skewed to low complexity. Residues Asn-88, Asp-187, 208–209 (TK), 217–224 (GKFGLGAK), and Lys-543 contribute to the ATP site.

This sequence belongs to the TOP6B family. Homodimer. Heterotetramer of two TOP6A and two TOP6B subunits. Interacts with SPO11-4.

Its subcellular location is the nucleus. It carries out the reaction ATP-dependent breakage, passage and rejoining of double-stranded DNA.. Its function is as follows. Component of the DNA topoisomerase VI involved in chromatin organization and progression of endoreduplication cycles. Relaxes both positive and negative superturns and exhibits a strong decatenase activity. The B subunit binds ATP. This Oryza sativa subsp. japonica (Rice) protein is DNA topoisomerase 6 subunit B (TOP6B).